Reading from the N-terminus, the 904-residue chain is Trichohyalin-like protein 1 (904 aa).

The EF-hand domain maps to 48 to 83 (CVLHAVEKNSNLLNIDSNGIISFDEFVLAIFNLLNL). Disordered regions lie at residues 102-792 (PEKE…CSVE) and 858-890 (PYTRGLPLDESPAGAQETPAPQALEDKQGHPQR). The span at 113 to 128 (QATTGDGQWTVGTSPT) shows a compositional bias: polar residues. Composition is skewed to basic and acidic residues over residues 172 to 185 (ASEHNDPKNKHLEG), 222 to 240 (TERKGQDKEISQEGDEPAR), 268 to 300 (ATQRPCEDQEVRTEKEKHSNIQEPPLQREDEPS), 349 to 371 (NLGEPEDYGRTSETQEKECETKD), and 385 to 398 (SDMRDERKERRGPE). The span at 443-452 (ETQYLSSEGG) shows a compositional bias: polar residues. Over residues 524–536 (VEEEDGYQGEDPE) the composition is skewed to acidic residues. The span at 538–554 (PFTQSDEGSSETPNSLA) shows a compositional bias: polar residues. A compositionally biased stretch (low complexity) spans 555 to 578 (SEEGNSSSETGELPVQGDSQSQGD). A compositionally biased stretch (polar residues) spans 586–598 (GGHNNNPDTQRQG). Positions 759-770 (GDQKSPAKKEHN) are enriched in basic and acidic residues. Positions 771 to 780 (SSVPWSSLEK) are enriched in polar residues. Over residues 881–890 (LEDKQGHPQR) the composition is skewed to basic and acidic residues.

This sequence belongs to the S-100 family.

This Homo sapiens (Human) protein is Trichohyalin-like protein 1 (TCHHL1).